A 799-amino-acid chain; its full sequence is Protein translocase subunit SecA 1 (799 aa).

Residues Gln-85, 103–107 (GEGKT), and Asp-504 contribute to the ATP site.

Belongs to the SecA family. In terms of assembly, monomer and homodimer. Part of the essential Sec protein translocation apparatus which comprises SecA, SecYEG and auxiliary proteins SecDF. Other proteins may also be involved.

The protein localises to the cell membrane. The protein resides in the cytoplasm. The enzyme catalyses ATP + H2O + cellular proteinSide 1 = ADP + phosphate + cellular proteinSide 2.. Its function is as follows. Part of the Sec protein translocase complex. Interacts with the SecYEG preprotein conducting channel. Has a central role in coupling the hydrolysis of ATP to the transfer of proteins into and across the cell membrane, serving as an ATP-driven molecular motor driving the stepwise translocation of polypeptide chains across the membrane. In Lactobacillus johnsonii (strain CNCM I-12250 / La1 / NCC 533), this protein is Protein translocase subunit SecA 1.